The primary structure comprises 188 residues: dCTP deaminase (188 aa).

Residues 111-116 (KSTYAR), 135-137 (TLE), glutamine 156, tyrosine 170, and glutamine 180 each bind dCTP. Glutamate 137 serves as the catalytic Proton donor/acceptor.

The protein belongs to the dCTP deaminase family. As to quaternary structure, homotrimer.

It catalyses the reaction dCTP + H2O + H(+) = dUTP + NH4(+). It functions in the pathway pyrimidine metabolism; dUMP biosynthesis; dUMP from dCTP (dUTP route): step 1/2. Functionally, catalyzes the deamination of dCTP to dUTP. The protein is dCTP deaminase of Coxiella burnetii (strain CbuK_Q154) (Coxiella burnetii (strain Q154)).